Here is a 155-residue protein sequence, read N- to C-terminus: uncharacterized protein (155 aa).

The region spanning 6–155 (LRIELGEETN…RDMVRLYLDL (150 aa)) is the N-acetyltransferase domain. CoA is bound by residues 69–71 (IAV), 77–82 (KKGFGK), and 111–117 (QLSLYQK).

Functionally, probable N-acetyltransferase. This is an uncharacterized protein from Bacillus subtilis (strain 168).